A 329-amino-acid chain; its full sequence is L-arabinose-binding periplasmic protein (329 aa).

Residues 1–23 (MHKFTKALAAIGLAAVMSQSAMA) form the signal peptide.

Belongs to the bacterial solute-binding protein 2 family.

The protein localises to the periplasm. Functionally, involved in the high-affinity L-arabinose membrane transport system. Binds with high affinity to arabinose, but can also bind D-galactose (approximately 2-fold reduction) and D-fucose (approximately 40-fold reduction). In Escherichia coli (strain K12), this protein is L-arabinose-binding periplasmic protein (araF).